Here is a 259-residue protein sequence, read N- to C-terminus: Global transcriptional regulator CodY (259 aa).

A GAF domain region spans residues 1-155; the sequence is MALLQKTRKI…GATVVGMEIL (155 aa). Residues 203-222 constitute a DNA-binding region (H-T-H motif); it reads ASKIADRVGITRSVIVNALR. Ser-215 is subject to Phosphoserine.

The protein belongs to the CodY family.

The protein localises to the cytoplasm. Functionally, DNA-binding global transcriptional regulator which is involved in the adaptive response to starvation and acts by directly or indirectly controlling the expression of numerous genes in response to nutrient availability. During rapid exponential growth, CodY is highly active and represses genes whose products allow adaptation to nutrient depletion. In Bacillus licheniformis (strain ATCC 14580 / DSM 13 / JCM 2505 / CCUG 7422 / NBRC 12200 / NCIMB 9375 / NCTC 10341 / NRRL NRS-1264 / Gibson 46), this protein is Global transcriptional regulator CodY.